A 287-amino-acid polypeptide reads, in one-letter code: Bifunctional protein FolD (287 aa).

Residues 166-168 (GAS) and Ile232 each bind NADP(+).

The protein belongs to the tetrahydrofolate dehydrogenase/cyclohydrolase family. Homodimer.

It carries out the reaction (6R)-5,10-methylene-5,6,7,8-tetrahydrofolate + NADP(+) = (6R)-5,10-methenyltetrahydrofolate + NADPH. It catalyses the reaction (6R)-5,10-methenyltetrahydrofolate + H2O = (6R)-10-formyltetrahydrofolate + H(+). It participates in one-carbon metabolism; tetrahydrofolate interconversion. Catalyzes the oxidation of 5,10-methylenetetrahydrofolate to 5,10-methenyltetrahydrofolate and then the hydrolysis of 5,10-methenyltetrahydrofolate to 10-formyltetrahydrofolate. The sequence is that of Bifunctional protein FolD from Aeromonas salmonicida (strain A449).